The chain runs to 245 residues: MTLFPVLLFLVAGLLPSFPANEDKDPAFTALLTTQTQVQREIVNKHNELRRAVSPPARNMLKMEWNKEAAANAQKWANQCNYRHSNPKDRMTSLKCGENLYMSSASSSWSQAIQSWFDEYNDFDFGVGPKTPNAVVGHYTQVVWYSSYLVGCGNAYCPNQKVLKYYYVCQYCPAGNWANRLYVPYEQGAPCASCPDNCDDGLCTNGCKYEDLYSNCKSLKLTLTCKHQLVRDSCKASCNCSNSIY.

Positions 1-20 are cleaved as a signal peptide; it reads MTLFPVLLFLVAGLLPSFPA. The 129-residue stretch at 43–171 folds into the SCP domain; the sequence is VNKHNELRRA…VLKYYYVCQY (129 aa). Intrachain disulfides connect C191-C198, C194-C203, C207-C240, C216-C234, and C225-C238. One can recognise a ShKT domain in the interval 207–240; that stretch reads CKYEDLYSNCKSLKLTLTCKHQLVRDSCKASCNC. N239 is a glycosylation site (N-linked (GlcNAc...) asparagine).

This sequence belongs to the CRISP family. In terms of assembly, interacts with A1BG. Salivary gland, pancreas and prostate &gt; epididymis, ovary, thymus and colon.

It is found in the secreted. This chain is Cysteine-rich secretory protein 3 (CRISP3), found in Homo sapiens (Human).